Here is a 239-residue protein sequence, read N- to C-terminus: DnaA regulatory inactivator Hda (239 aa).

It belongs to the DnaA family. HdA subfamily. In terms of assembly, the active form seems to be an ADP-bound monomer. Forms the RIDA complex (regulatory inactivation of DnaA) of ATP-DnaA, ADP-Hda and the DNA-loaded beta sliding clamp (dnaN).

In terms of biological role, mediates the interaction of DNA replication initiator protein DnaA with DNA polymerase subunit beta sliding clamp (dnaN). Stimulates hydrolysis of ATP-DnaA to ADP-DnaA, rendering DnaA inactive for reinitiation, a process called regulatory inhibition of DnaA or RIDA. The chain is DnaA regulatory inactivator Hda from Yersinia pseudotuberculosis serotype O:1b (strain IP 31758).